Reading from the N-terminus, the 906-residue chain is Translation initiation factor IF-2 (906 aa).

3 disordered regions span residues 94 to 125, 165 to 232, and 270 to 321; these read APEK…PETA, ESEA…TGKK, and RQEQ…SSEV. Composition is skewed to basic and acidic residues over residues 165–176, 222–232, and 270–284; these read ESEAEKGTEIEK, GPAEARETGKK, and RQEQ…KREA. Residues 299–313 show a composition bias toward basic residues; the sequence is QQRRSLKRGGKRKKY. A tr-type G domain is found at 405 to 574; sequence ERPPVITIMG…LLQAEMMELK (170 aa). Positions 414 to 421 are G1; the sequence is GHVDHGKT. 414 to 421 contributes to the GTP binding site; that stretch reads GHVDHGKT. The segment at 439-443 is G2; that stretch reads GITQH. The G3 stretch occupies residues 460–463; that stretch reads DTPG. GTP-binding positions include 460 to 464 and 514 to 517; these read DTPGH and NKMD. The tract at residues 514 to 517 is G4; the sequence is NKMD. A G5 region spans residues 550-552; that stretch reads SAH.

It belongs to the TRAFAC class translation factor GTPase superfamily. Classic translation factor GTPase family. IF-2 subfamily.

The protein resides in the cytoplasm. Functionally, one of the essential components for the initiation of protein synthesis. Protects formylmethionyl-tRNA from spontaneous hydrolysis and promotes its binding to the 30S ribosomal subunits. Also involved in the hydrolysis of GTP during the formation of the 70S ribosomal complex. This Sulfurovum sp. (strain NBC37-1) protein is Translation initiation factor IF-2.